Reading from the N-terminus, the 456-residue chain is UDP-N-acetylmuramate--L-alanine ligase (456 aa).

Residue 114–120 (GTHGKTT) participates in ATP binding.

The protein belongs to the MurCDEF family.

It is found in the cytoplasm. The catalysed reaction is UDP-N-acetyl-alpha-D-muramate + L-alanine + ATP = UDP-N-acetyl-alpha-D-muramoyl-L-alanine + ADP + phosphate + H(+). The protein operates within cell wall biogenesis; peptidoglycan biosynthesis. Functionally, cell wall formation. This Porphyromonas gingivalis (strain ATCC 33277 / DSM 20709 / CIP 103683 / JCM 12257 / NCTC 11834 / 2561) protein is UDP-N-acetylmuramate--L-alanine ligase.